Consider the following 286-residue polypeptide: MVKIGVHVSIAGSIARAVERAMAIDCDTFQIFSRNPRGWTFKPLAEEDAALFQGALGTSGIGPAVVHMPYLPNLASPKEEIWRKSVEALTEELHRCSMLDVPYLVTHLGHHMGEGIGAGEGRVQQAIDAAFSQSDPGSSRVMLLLENTAGEKNSVGSRFEEIGRIRESCSDPDRIGVCMDTCHAFAAGYDLRNEVGLSRTLEAFEDGIGIEHLHVIHLNDAKADIGSHLDRHTHIGLGMIGEEGCSGILTHPTLASLPFICETPEDAVRDNAANIRAVRRLAVPRA.

Zn(2+) is bound by residues H67, H107, E146, D180, H183, H217, D230, H232, and E262.

It belongs to the AP endonuclease 2 family. Zn(2+) serves as cofactor.

The catalysed reaction is Endonucleolytic cleavage to 5'-phosphooligonucleotide end-products.. In terms of biological role, endonuclease IV plays a role in DNA repair. It cleaves phosphodiester bonds at apurinic or apyrimidinic (AP) sites, generating a 3'-hydroxyl group and a 5'-terminal sugar phosphate. In Methanosphaerula palustris (strain ATCC BAA-1556 / DSM 19958 / E1-9c), this protein is Probable endonuclease 4.